Here is a 261-residue protein sequence, read N- to C-terminus: MFGSDNRADYDNGFPWHPHRGIETITYQIKGKTFHEDSEGHRGIIAPGEIQWMTAGSGIFHEEMPKPIYYGEENKYRERNDSNAGIQLWLNMPASSKMADPAYRSIRSDQIPQISDDYGNRIRIVAGTVNRVSGALNENFQYDLMQRIDPYYVEILMEPDTRTSLSVPEGHRAIMAIVEGSIRVNGSTFNEKNVAVLSKEGTDIFIDSQANSRLIFLAGKPLNEPIAWYGPIVMNTRDQLIQAFNELQEGKFVKNRNPVWQ.

A divalent metal cation contacts are provided by His17, His19, His61, and Glu63.

Belongs to the pirin family. Requires a divalent metal cation as cofactor.

The enzyme catalyses quercetin + O2 = 2-(3,4-dihydroxybenzoyloxy)-4,6-dihydroxybenzoate + CO. It functions in the pathway flavonoid metabolism; quercetin degradation. Putative quercetin 2,3-dioxygenase. This is Putative quercetin 2,3-dioxygenase Ta0133 from Thermoplasma acidophilum (strain ATCC 25905 / DSM 1728 / JCM 9062 / NBRC 15155 / AMRC-C165).